Here is a 513-residue protein sequence, read N- to C-terminus: MELEFRSPSSPSEWAITSTITLLFLILLRKILKPKTPTPNLPPGPKKLPLIGNIHQLIGGIPHQKMRDLSQIHGPIMHLKLGELENVIISSKEAAEKILKTHDVLFAQRPQMIVAKSVTYDFHDITFSPYGDYWRQLRKITMIELLAAKRVLSFRAIREEETTKLVELIRGFQSGESINFTRMIDSTTYGITSRAACGKIWEGENLFISSLEKIMFEVGSGISFADAYPSVKLLKVFSGIRIRVDRLQKNIDKIFESIIEEHREERKGRKKGEDDLDLVDVLLNLQESGTLEIPLSDVTIKAVIMDMFVAGVDTSAATTEWLMSELIKNPEVMKKAQAEIREKFKGKASIDEADLQDLHYLKLVIKETFRLHPSVPLLVPRECRESCVIEGYDIPVKTKIMVNAWAMGRDTKYWGEDAEKFKPERFIDSPIDFKGHNFEYLPFGSGRRSCPGMAFGVANVEIAVAKLLYHFDWRLGDGMVPENLDMTEKIGGTTRRLSELYIIPTPYVPQNSA.

The chain crosses the membrane as a helical; Signal-anchor for type II membrane protein span at residues 12–28 (SEWAITSTITLLFLILL). Cysteine 450 contacts heme.

Belongs to the cytochrome P450 family. It depends on heme as a cofactor. As to expression, expressed in mature seeds.

It is found in the membrane. The catalysed reaction is (-)-casbene + reduced [NADPH--hemoprotein reductase] + O2 = 8-hydroxycasbene + oxidized [NADPH--hemoprotein reductase] + H2O + H(+). It carries out the reaction 4-hydroxycasbene + reduced [NADPH--hemoprotein reductase] + O2 = 4,8-dihydroxycasbene + oxidized [NADPH--hemoprotein reductase] + H2O + H(+). It catalyses the reaction 4,8-dihydroxycasbene + reduced [NADPH--hemoprotein reductase] + O2 = 4,5,8-trihydroxycasbene + oxidized [NADPH--hemoprotein reductase] + H2O + H(+). It functions in the pathway secondary metabolite biosynthesis; terpenoid biosynthesis. Functionally, involved in the biosynthesis of macrocyclic lathyrane type diterpenoids (also called Euphorbia factors) natural products, including the cyclization route from casbene to jolkinol C, a precursor for ingenol mebutate that is used to treat actinic keratosis, a precancerous skin condition. Catalyzes the hydroxylation of (-)-casbene and 4-hydroxycasbene to produce 8-hydroxycasbene and 4,8-dihydroxycasbene, respectively. Also mediates the formation of 4-hydroxy-8-ketocasbene from 4,8-dihydroxycasbene. Together with ADH1, triggers the biosynthesis of 8-ketocasbene from 8-hydroxycasbene. This is Cytochrome P450 71D445 from Euphorbia lathyris (Caper spurge).